Reading from the N-terminus, the 503-residue chain is Sugar phosphate exchanger 3 (503 aa).

The chain crosses the membrane as a helical span at residues 20 to 40 (YTHHHLAAFLLTFFSYSLLHA). 2 N-linked (GlcNAc...) asparagine glycosylation sites follow: N62 and N71. A run of 5 helical transmembrane segments spans residues 87 to 107 (TLFL…GLFI), 119 to 139 (LVLT…GTLT), 152 to 172 (LVWI…VAIM), 183 to 203 (FVFG…AFLA), and 214 to 234 (AFLV…FGLV). N275 carries N-linked (GlcNAc...) asparagine glycosylation. Transmembrane regions (helical) follow at residues 300–322 (GVLL…FFWL), 342–362 (IWYD…SDLM), 367–387 (PVLT…SHSP), 395–415 (FIMS…SSAI), 437–457 (GIVD…VPLI), and 466–486 (VFYF…PLIV).

The protein belongs to the major facilitator superfamily. Organophosphate:Pi antiporter (OPA) (TC 2.A.1.4) family.

The protein resides in the endoplasmic reticulum membrane. Its subcellular location is the lysosome membrane. Its function is as follows. Unlike the other SLC37 members, seems to lack glucose-6-phosphate antiporter activity. The polypeptide is Sugar phosphate exchanger 3 (slc37a3) (Xenopus laevis (African clawed frog)).